The following is a 406-amino-acid chain: uncharacterized protein (406 aa).

The segment covering 136-153 (SQKNWGSEKNWNSPSQGP) has biased composition (polar residues). The interval 136–157 (SQKNWGSEKNWNSPSQGPASRE) is disordered.

This is an uncharacterized protein from Rattus norvegicus (Rat).